Reading from the N-terminus, the 3419-residue chain is Utrophin (3419 aa).

The tract at residues 1 to 246 (MAKYGHLEAS…LPDKKSIIMY (246 aa)) is actin-binding. The residue at position 4 (Tyr4) is a Phosphotyrosine. Position 10 is a phosphoserine (Ser10). Calponin-homology (CH) domains follow at residues 31–135 (DVQK…LHWQ) and 150–255 (TNSE…EVLP). Residues 268–905 (TLPRKYKKEC…YQQQLENELK (638 aa)) are interaction with SYNM. At Ser295 the chain carries Phosphoserine. 17 Spectrin repeats span residues 312–416 (DSYQ…SRLH), 421–525 (ELQK…NRLQ), 532–636 (QELL…NQVT), 690–795 (KKFD…RKIQ), 801–901 (NAYF…QQLE), 910–1012 (PAYL…RSLE), 1019–1121 (RDFK…SRLS), 1128–1229 (MNLK…HTLE), 1236–1333 (VELL…ISLE), 1335–1436 (QLQV…LFQK), 1438–1540 (ANFE…QDLE), 1547–1648 (RKLK…NTLL), 1653–1747 (QLEV…INSA), 1748–1840 (QMLI…KIKA), 1841–1958 (IPQR…SDRR), 1969–2070 (KQFH…PRLK), and 2077–2176 (SGYR…KTRT). Residues 1336 to 1761 (LQVLRETDHM…GQDPAGTVEA (426 aa)) form an interaction with SYNM region. A Phosphoserine modification is found at Ser1998. Residue Ser2201 is modified to Phosphoserine. 5 Spectrin repeats span residues 2216-2319 (ADLD…QQLE), 2336-2426 (EELM…SALE), 2433-2542 (QTSR…AHLE), 2549-2674 (NRLL…KQVG), and 2681-2783 (RDLQ…KQLQ). Residues 2616 to 2640 (DQPIEAPEEPRRNPQSKTELTPEER) form a disordered region. The segment at 2785–3152 (AHRDFGPSSQ…TVLEGDNLET (368 aa)) is interaction with SYNM. The WW domain occupies 2799-2832 (TSVQLPWQRSISHNKVPYYINHQTQTTCWDHPKM). A ZZ-type; degenerate zinc finger spans residues 3052-3108 (KHQAKCNICKECPIVGFRYRSLKHFNYDVCQSCFFSGRTAKGHKLHYPMVEYCIPTT). Zn(2+) is bound by residues Cys3057, Cys3060, Cys3081, and Cys3084. Disordered regions lie at residues 3277-3296 (RRGL…YHTS) and 3344-3395 (DSDS…TDLT). Ser3284 carries the phosphoserine modification.

In terms of assembly, homodimer. Interacts with the syntrophins SNTA1; SNTB1 and SNTB2. Interacts with SYNM. Interacts (via its WWW and ZZ domains) with DAG1 (via the PPXY motif of betaDAG1); the interaction is inhibited by the tyrosine phosphorylation of the PPXY motif of DAG1. Interacts with DTNB. Interacts with PGM5.

It is found in the postsynaptic cell membrane. Its subcellular location is the cytoplasm. It localises to the cytoskeleton. Its function is as follows. May play a role in anchoring the cytoskeleton to the plasma membrane. The chain is Utrophin from Rattus norvegicus (Rat).